The sequence spans 845 residues: MLSGVWFLSVLTVAGILQTESRKTAKDICKIRCLCEEKENVLNINCENKGFTTVSLLQPPQYRIYQLFLNGNLLTRLYPNEFVNYSNAVTLHLGNNGLQEIRTGAFSGLKTLKRLHLNNNKLEILREDTFLGLESLEYLQADYNYISAIEAGAFSKLNKLKVLILNDNLLLSLPSNVFRFVLLTHLDLRGNRLKVMPFAGVLEHIGGIMEIQLEENPWNCTCDLLPLKAWLDTITVFVGEIVCETPFRLHGKDVTQLTRQDLCPRKSASDSSQRGSHADTHVQRLSPTMNPALNPTRAPKASRPPKMRNRPTPRVTVSKDRQSFGPIMVYQTKSPVPLTCPSSCVCTSQSSDNGLNVNCQERKFTNISDLQPKPTSPKKLYLTGNYLQTVYKNDLLEYSSLDLLHLGNNRIAVIQEGAFTNLTSLRRLYLNGNYLEVLYPSMFDGLQSLQYLYLEYNVIKEIKPLTFDALINLQLLFLNNNLLRSLPDNIFGGTALTRLNLRNNHFSHLPVKGVLDQLPAFIQIDLQENPWDCTCDIMGLKDWTEHANSPVIINEVTCESPAKHAGEILKFLGREAICPDSPNLSDGTVLSMNHNTDTPRSLSVSPSSYPELHTEVPLSVLILGLLVVFILSVCFGAGLFVFVLKRRKGVPSVPRNTNNLDVSSFQLQYGSYNTETHDKTDGHVYNYIPPPVGQMCQNPIYMQKEGDPVAYYRNLQEFSYSNLEEKKEEPATPAYTISATELLEKQATPREPELLYQNIAERVKELPSAGLVHYNFCTLPKRQFAPSYESRRQNQDRINKTVLYGTPRKCFVGQSKPNHPLLQAKPQSEPDYLEVLEKQTAISQL.

The signal sequence occupies residues 1–21 (MLSGVWFLSVLTVAGILQTES). Topologically, residues 22-621 (RKTAKDICKI…LHTEVPLSVL (600 aa)) are extracellular. 2 disulfide bridges follow: cysteine 29–cysteine 35 and cysteine 33–cysteine 46. LRR repeat units follow at residues 63-84 (RIYQ…EFVN), 87-108 (NAVT…AFSG), 111-132 (TLKR…TFLG), 135-156 (SLEY…AFSK), 159-180 (KLKV…VFRF), and 182-203 (LLTH…GVLE). A glycan (N-linked (GlcNAc...) asparagine) is linked at asparagine 84. The tract at residues 167–215 (DNLLLSLPSNVFRFVLLTHLDLRGNRLKVMPFAGVLEHIGGIMEIQLEE) is required for interaction with PTPRD. In terms of domain architecture, LRRCT 1 spans 216 to 265 (NPWNCTCDLLPLKAWLDTITVFVGEIVCETPFRLHGKDVTQLTRQDLCPR). 2 disulfide bridges follow: cysteine 220/cysteine 243 and cysteine 222/cysteine 263. The interval 263–321 (CPRKSASDSSQRGSHADTHVQRLSPTMNPALNPTRAPKASRPPKMRNRPTPRVTVSKDR) is disordered. Positions 283–293 (QRLSPTMNPAL) are enriched in polar residues. In terms of domain architecture, LRRNT spans 331-373 (QTKSPVPLTCPSSCVCTSQSSDNGLNVNCQERKFTNISDLQPK). LRR repeat units lie at residues 376 to 397 (SPKK…DLLE), 400 to 421 (SLDL…AFTN), 424 to 445 (SLRR…MFDG), 448 to 469 (SLQY…TFDA), 472 to 493 (NLQL…IFGG), and 495 to 516 (ALTR…GVLD). N-linked (GlcNAc...) asparagine glycosylation is present at asparagine 421. In terms of domain architecture, LRRCT 2 spans 529-580 (NPWDCTCDIMGLKDWTEHANSPVIINEVTCESPAKHAGEILKFLGREAICPD). A helical transmembrane segment spans residues 622–642 (ILGLLVVFILSVCFGAGLFVF). At 643-845 (VLKRRKGVPS…LEKQTAISQL (203 aa)) the chain is on the cytoplasmic side. Tyrosine 756 carries the post-translational modification Phosphotyrosine.

Belongs to the SLITRK family. As to quaternary structure, interacts with PTPRD; this interaction is PTPRD splicing-dependent and may induce pre-synaptic differentiation. Interacts with NTRK2. Expressed predominantly in the cerebral cortex of the brain but also at low levels in the spinal cord and medulla. Also expressed in some astrocytic brain tumors such as astrocytomas, oligodendrogliomas, glioblastomas, gangliogliomas and primitive neuroectodermal tumors.

The protein localises to the membrane. It is found in the cell membrane. Its subcellular location is the cell projection. The protein resides in the dendrite. Functionally, it is involved in synaptogenesis and promotes excitatory synapse differentiation. Suppresses neurite outgrowth. Involved in the negative regulation of NTRK2. This chain is SLIT and NTRK-like protein 2 (SLITRK2), found in Homo sapiens (Human).